The primary structure comprises 1073 residues: Ubiquitin carboxyl-terminal hydrolase 53 (1073 aa).

Positions 30-351 constitute a USP domain; that stretch reads KGLLNEPGQN…QPLLLFYANP (322 aa). Residue Cys-41 is the Nucleophile of the active site. Zn(2+) contacts are provided by His-66, Cys-68, Cys-73, Cys-76, His-132, Cys-144, Cys-149, His-152, Cys-165, Cys-168, Cys-224, and Cys-228. The active-site Proton acceptor is the His-301. Disordered regions lie at residues 391–437 and 485–636; these read LKEN…HIDQ and LSHF…PKQK. Positions 407–418 are enriched in polar residues; that stretch reads KFPTDNISSSNR. The span at 524-541 shows a compositional bias: low complexity; that stretch reads QSRASAQIISSSKSQILA. Residues 553-563 are compositionally biased toward polar residues; sequence DNGTGYDTDSS. Residues 612–627 are compositionally biased toward low complexity; the sequence is NISNKPKSSKDPSFSN.

The protein belongs to the peptidase C19 family. In terms of assembly, interacts (via the C-terminal region) with the heterodimer TJP1:TJP2. In terms of tissue distribution, expressed predominantly in skeletal muscle and heart.

The protein resides in the cell junction. Its subcellular location is the tight junction. The enzyme catalyses Thiol-dependent hydrolysis of ester, thioester, amide, peptide and isopeptide bonds formed by the C-terminal Gly of ubiquitin (a 76-residue protein attached to proteins as an intracellular targeting signal).. In terms of biological role, deubiquitinase that mediates 'Lys-63'-linked deubiquitination of tight junction proteins, such as MARVELD2 and LSR, and which is involved in the survival of auditory hair cells and hearing. Specifically cleaves 'Lys-63'-linked polyubiquitin chains composed of at least 3 ubiquitin molecules, while it is not able to deubiquitinate substrates with shorter ubiquitin chains: recognizes ubiquitin chain in position S2 and catalyzes en bloc cleavage of polyubiquitin chains from substrate proteins. Probably acts by modulating the barrier properties and mechanical stability of tight junctions via deubiquitination of MARVELD2 and LSR. The polypeptide is Ubiquitin carboxyl-terminal hydrolase 53 (Homo sapiens (Human)).